The following is a 112-amino-acid chain: Hydrogenase maturation factor HypA (112 aa).

Residue His2 coordinates Ni(2+). Zn(2+)-binding residues include Cys72, Cys75, Cys88, and Cys91.

Belongs to the HypA/HybF family.

In terms of biological role, involved in the maturation of [NiFe] hydrogenases. Required for nickel insertion into the metal center of the hydrogenase. The protein is Hydrogenase maturation factor HypA of Francisella philomiragia subsp. philomiragia (strain ATCC 25017 / CCUG 19701 / FSC 153 / O#319-036).